The sequence spans 229 residues: Ribonuclease 3 (229 aa).

In terms of domain architecture, RNase III spans 7-132 (ISAFCDRIGH…VIAAVYRDAG (126 aa)). Mg(2+) is bound at residue Glu-45. The active site involves Asp-49. Mg(2+) contacts are provided by Asp-118 and Glu-121. Residue Glu-121 is part of the active site. Residues 157–226 (DPKTALQEWA…AKALLAQVES (70 aa)) form the DRBM domain.

This sequence belongs to the ribonuclease III family. In terms of assembly, homodimer. Mg(2+) is required as a cofactor.

Its subcellular location is the cytoplasm. It catalyses the reaction Endonucleolytic cleavage to 5'-phosphomonoester.. In terms of biological role, digests double-stranded RNA. Involved in the processing of primary rRNA transcript to yield the immediate precursors to the large and small rRNAs (23S and 16S). Processes some mRNAs, and tRNAs when they are encoded in the rRNA operon. Processes pre-crRNA and tracrRNA of type II CRISPR loci if present in the organism. In Dinoroseobacter shibae (strain DSM 16493 / NCIMB 14021 / DFL 12), this protein is Ribonuclease 3.